Reading from the N-terminus, the 417-residue chain is Hydroxysqualene dehydroxylase (417 aa).

It belongs to the HpnE family.

The catalysed reaction is squalene + FAD + H2O + H(+) = hydroxysqualene + FADH2. The protein operates within secondary metabolite biosynthesis; hopanoid biosynthesis. Functionally, involved in the biosynthesis of the hopanoid precursor squalene (SQ) from farnesyl diphosphate (FPP). Catalyzes the third (last) step, the reduction of hydroxysqualene (HSQ) to SQ. The chain is Hydroxysqualene dehydroxylase from Sinorhizobium fredii (strain NBRC 101917 / NGR234).